The following is a 311-amino-acid chain: Porphobilinogen deaminase (311 aa).

Cys-241 bears the S-(dipyrrolylmethanemethyl)cysteine mark.

It belongs to the HMBS family. Monomer. Dipyrromethane serves as cofactor.

It carries out the reaction 4 porphobilinogen + H2O = hydroxymethylbilane + 4 NH4(+). It participates in porphyrin-containing compound metabolism; protoporphyrin-IX biosynthesis; coproporphyrinogen-III from 5-aminolevulinate: step 2/4. Functionally, tetrapolymerization of the monopyrrole PBG into the hydroxymethylbilane pre-uroporphyrinogen in several discrete steps. This is Porphobilinogen deaminase (hemC) from Halalkalibacterium halodurans (strain ATCC BAA-125 / DSM 18197 / FERM 7344 / JCM 9153 / C-125) (Bacillus halodurans).